The chain runs to 494 residues: MFKFASAVILCLVAASSTQAQHNPHWWGNRNTIVHLFEWKWSDIAAECENFLGPQGFAGVQVSPVNENIISPGRPWWERYQPISYKLTTRSGDEQEFGDMVRRCNDVGIRIYVDVLLNHMSGDFDGIALGTAGSETEPSTKSFPGVPYTAQDFHPSCEITDWNDRFQVQQCELVGLKDLDQSSDWVRSKLIEFLDHLIELGVAGFRVDAAKHMAADDLSYIYSSLSDLNIEHGFPHNARPFIFQEVIDHGHETVSRDEYNQLGAVTEFRFSEEIGNAFRGNNALKWLQSWGTGWGFLPSGQALTFVDNHDNQRDMGAVLNYKSPKQYKMATAFHLAYPYGISRVMSSFAFDDHDTAPPQDEQEKIISPEFDEEGGCVNGWICEHRWRQIYAMVGFKNAVRDTEISDWWDNGDNQISFCRGNKGFLAVNNNLYDLSQELQTCLPAGVYCDVISGSLVDGSCTGKSVTVDNNGYGYIHIGSDEFDGALALHVDAKI.

The signal sequence occupies residues 1-20 (MFKFASAVILCLVAASSTQA). Glutamine 21 carries the pyrrolidone carboxylic acid modification. A disulfide bond links cysteine 48 and cysteine 104. Ca(2+) is bound by residues asparagine 118, glutamine 169, and aspartate 178. A disulfide bond links cysteine 157 and cysteine 171. Residue arginine 206 participates in chloride binding. Aspartate 208 functions as the Nucleophile in the catalytic mechanism. Ca(2+) is bound at residue histidine 212. The active-site Proton donor is glutamate 245. Residues asparagine 308 and arginine 343 each contribute to the chloride site. 3 cysteine pairs are disulfide-bonded: cysteine 376-cysteine 382, cysteine 418-cysteine 441, and cysteine 448-cysteine 460.

The protein belongs to the glycosyl hydrolase 13 family. Monomer. Ca(2+) is required as a cofactor. The cofactor is chloride.

The protein resides in the secreted. It carries out the reaction Endohydrolysis of (1-&gt;4)-alpha-D-glucosidic linkages in polysaccharides containing three or more (1-&gt;4)-alpha-linked D-glucose units.. This chain is Alpha-amylase-related protein (Amyrel), found in Drosophila ercepeae (Fruit fly).